A 256-amino-acid chain; its full sequence is Putative cysteine-rich repeat secretory protein 21 (256 aa).

Residues Met-1–Ser-30 form the signal peptide. Gnk2-homologous domains are found at residues Tyr-37 to Thr-139 and Tyr-145 to Phe-253.

The protein belongs to the cysteine-rich repeat secretory protein family.

The protein resides in the secreted. This Arabidopsis thaliana (Mouse-ear cress) protein is Putative cysteine-rich repeat secretory protein 21 (CRRSP21).